The primary structure comprises 309 residues: Dihydroorotate dehydrogenase B (NAD(+)), catalytic subunit (309 aa).

Residues S21 and 45–46 contribute to the FMN site; that span reads KA. Substrate is bound by residues K45 and 69 to 73; that span reads NAIGL. Residues N99 and N127 each coordinate FMN. Substrate is bound at residue N127. Residue C130 is the Nucleophile of the active site. FMN contacts are provided by K165 and I191. Substrate is bound at residue 192-193; the sequence is NT. Residues G217, 243-244, and 265-266 each bind FMN; these read GG and GT.

It belongs to the dihydroorotate dehydrogenase family. Type 1 subfamily. In terms of assembly, heterotetramer of 2 PyrK and 2 PyrD type B subunits. FMN is required as a cofactor.

The protein resides in the cytoplasm. The enzyme catalyses (S)-dihydroorotate + NAD(+) = orotate + NADH + H(+). It functions in the pathway pyrimidine metabolism; UMP biosynthesis via de novo pathway; orotate from (S)-dihydroorotate (NAD(+) route): step 1/1. Catalyzes the conversion of dihydroorotate to orotate with NAD(+) as electron acceptor. This Bacillus thuringiensis (strain Al Hakam) protein is Dihydroorotate dehydrogenase B (NAD(+)), catalytic subunit (pyrD).